We begin with the raw amino-acid sequence, 322 residues long: Formimidoylglutamase (322 aa).

Mn(2+)-binding residues include histidine 127, aspartate 163, histidine 165, aspartate 167, aspartate 254, and aspartate 256.

This sequence belongs to the arginase family. It depends on Mn(2+) as a cofactor.

The catalysed reaction is N-formimidoyl-L-glutamate + H2O = formamide + L-glutamate. Its pathway is amino-acid degradation; L-histidine degradation into L-glutamate; L-glutamate from N-formimidoyl-L-glutamate (hydrolase route): step 1/1. Catalyzes the conversion of N-formimidoyl-L-glutamate to L-glutamate and formamide. In Paraburkholderia xenovorans (strain LB400), this protein is Formimidoylglutamase.